The sequence spans 388 residues: Ferrochelatase (388 aa).

2 residues coordinate Fe cation: His196 and Glu277.

This sequence belongs to the ferrochelatase family.

Its subcellular location is the cytoplasm. It carries out the reaction heme b + 2 H(+) = protoporphyrin IX + Fe(2+). It participates in porphyrin-containing compound metabolism; protoheme biosynthesis; protoheme from protoporphyrin-IX: step 1/1. Catalyzes the ferrous insertion into protoporphyrin IX. This Nostoc sp. (strain PCC 7120 / SAG 25.82 / UTEX 2576) protein is Ferrochelatase.